The chain runs to 220 residues: UPF0758 protein ASA_4229 (220 aa).

In terms of domain architecture, MPN spans 95 to 220 (EQLQRGDALT…TVSFAERGWL (126 aa)). His169, His171, and Asp182 together coordinate Zn(2+). Positions 169–182 (HNHPSGVAEPSRAD) match the JAMM motif motif.

The protein belongs to the UPF0758 family.

In Aeromonas salmonicida (strain A449), this protein is UPF0758 protein ASA_4229.